A 203-amino-acid polypeptide reads, in one-letter code: Large ribosomal subunit protein uL13 (203 aa).

A2 is subject to N-acetylalanine. A Citrulline modification is found at R59. S77 is subject to Phosphoserine. R140 carries the citrulline modification. N6-acetyllysine is present on K191.

It belongs to the universal ribosomal protein uL13 family. Component of the 60S ribosome. Component of the GAIT complex. Interacts with EIF4G1. Phosphorylation at Ser-77 upon interferon-gamma treatment in macrophages involves a DAPK1-DAPK3 kinase cascade and is causing release from the ribosome, association with the GAIT complex and subsequent involvement in transcript-selective translation inhibition. In terms of processing, citrullinated by PADI4.

It is found in the cytoplasm. Associated with ribosomes but is not required for canonical ribosome function and has extra-ribosomal functions. Component of the GAIT (gamma interferon-activated inhibitor of translation) complex which mediates interferon-gamma-induced transcript-selective translation inhibition in inflammation processes. Upon interferon-gamma activation and subsequent phosphorylation dissociates from the ribosome and assembles into the GAIT complex which binds to stem loop-containing GAIT elements in the 3'-UTR of diverse inflammatory mRNAs (such as ceruplasmin) and suppresses their translation. In the GAIT complex interacts with m7G cap-bound eIF4G at or near the eIF3-binding site and blocks the recruitment of the 43S ribosomal complex. Involved in methylation of rRNA. This chain is Large ribosomal subunit protein uL13 (RPL13A), found in Canis lupus familiaris (Dog).